Consider the following 418-residue polypeptide: eIF5-mimic protein 2-B (418 aa).

The segment covering 1–15 (MSYQKQQKPTLTGQR) has biased composition (polar residues). A disordered region spans residues 1-29 (MSYQKQQKPTLTGQRFKTRKRDEKERFDP). Residues 247–414 (NQQSLGARKE…KNAEEESESE (168 aa)) enclose the W2 domain.

This sequence belongs to the BZW family.

Its function is as follows. Translation initiation regulator which may repress repeat-associated non-AUG (RAN) initiated translation probably by acting as a competitive inhibitor of eukaryotic translation initiation factor 5 (EIF5) function. Enhances histone H4 gene transcription but does not seem to bind DNA directly. This Danio rerio (Zebrafish) protein is eIF5-mimic protein 2-B (bzw1b).